The chain runs to 198 residues: Ribose 1,5-bisphosphate phosphokinase PhnN (198 aa).

ATP is bound at residue Gly25–Asp32.

This sequence belongs to the ribose 1,5-bisphosphokinase family.

The enzyme catalyses alpha-D-ribose 1,5-bisphosphate + ATP = 5-phospho-alpha-D-ribose 1-diphosphate + ADP. It functions in the pathway metabolic intermediate biosynthesis; 5-phospho-alpha-D-ribose 1-diphosphate biosynthesis; 5-phospho-alpha-D-ribose 1-diphosphate from D-ribose 5-phosphate (route II): step 3/3. In terms of biological role, catalyzes the phosphorylation of ribose 1,5-bisphosphate to 5-phospho-D-ribosyl alpha-1-diphosphate (PRPP). This Bradyrhizobium diazoefficiens (strain JCM 10833 / BCRC 13528 / IAM 13628 / NBRC 14792 / USDA 110) protein is Ribose 1,5-bisphosphate phosphokinase PhnN.